Here is a 255-residue protein sequence, read N- to C-terminus: Hydroxyacylglutathione hydrolase (255 aa).

Zn(2+) is bound by residues H56, H58, D60, H61, H114, D133, and H171.

Belongs to the metallo-beta-lactamase superfamily. Glyoxalase II family. As to quaternary structure, monomer. The cofactor is Zn(2+).

It catalyses the reaction an S-(2-hydroxyacyl)glutathione + H2O = a 2-hydroxy carboxylate + glutathione + H(+). It participates in secondary metabolite metabolism; methylglyoxal degradation; (R)-lactate from methylglyoxal: step 2/2. In terms of biological role, thiolesterase that catalyzes the hydrolysis of S-D-lactoyl-glutathione to form glutathione and D-lactic acid. The chain is Hydroxyacylglutathione hydrolase from Rhodopseudomonas palustris (strain ATCC BAA-98 / CGA009).